Here is a 312-residue protein sequence, read N- to C-terminus: Aspartate carbamoyltransferase catalytic subunit (312 aa).

R58 and T59 together coordinate carbamoyl phosphate. An L-aspartate-binding site is contributed by K86. Carbamoyl phosphate-binding residues include R108, H136, and Q139. L-aspartate is bound by residues R169 and R223. Carbamoyl phosphate is bound by residues G264 and P265.

It belongs to the aspartate/ornithine carbamoyltransferase superfamily. ATCase family. Heterododecamer (2C3:3R2) of six catalytic PyrB chains organized as two trimers (C3), and six regulatory PyrI chains organized as three dimers (R2).

It carries out the reaction carbamoyl phosphate + L-aspartate = N-carbamoyl-L-aspartate + phosphate + H(+). It participates in pyrimidine metabolism; UMP biosynthesis via de novo pathway; (S)-dihydroorotate from bicarbonate: step 2/3. In terms of biological role, catalyzes the condensation of carbamoyl phosphate and aspartate to form carbamoyl aspartate and inorganic phosphate, the committed step in the de novo pyrimidine nucleotide biosynthesis pathway. The sequence is that of Aspartate carbamoyltransferase catalytic subunit from Desulforapulum autotrophicum (strain ATCC 43914 / DSM 3382 / VKM B-1955 / HRM2) (Desulfobacterium autotrophicum).